The chain runs to 870 residues: Valine--tRNA ligase (870 aa).

Residues 1 to 13 (MTSQTFTTSSATP) are compositionally biased toward polar residues. A disordered region spans residues 1–21 (MTSQTFTTSSATPPTRGVVPD). Residues 63-73 (PTVSGHLHPGH) carry the 'HIGH' region motif. The interval 479-505 (YDHPLLPDESALPVDPASQPPSGYQES) is disordered. Positions 595-599 (KMSKS) match the 'KMSKS' region motif. K598 lines the ATP pocket.

The protein belongs to the class-I aminoacyl-tRNA synthetase family. ValS type 2 subfamily. In terms of assembly, monomer.

The protein resides in the cytoplasm. It carries out the reaction tRNA(Val) + L-valine + ATP = L-valyl-tRNA(Val) + AMP + diphosphate. Functionally, catalyzes the attachment of valine to tRNA(Val). As ValRS can inadvertently accommodate and process structurally similar amino acids such as threonine, to avoid such errors, it has a 'posttransfer' editing activity that hydrolyzes mischarged Thr-tRNA(Val) in a tRNA-dependent manner. In Cutibacterium acnes (strain DSM 16379 / KPA171202) (Propionibacterium acnes), this protein is Valine--tRNA ligase.